Reading from the N-terminus, the 469-residue chain is IAA-alanine resistance protein 1 (469 aa).

The first 28 residues, 1-28 (MSFSLRKLLVPILVLVLFLDLCVESGFS), serve as a signal peptide directing secretion. The interval 33–58 (ARDDHVHHHGGGCSHSHDHDHDHDHD) is disordered. A compositionally biased stretch (basic and acidic residues) spans 47 to 58 (HSHDHDHDHDHD). 2 helical membrane passes run 114–134 (CSLLVSLASLICLVLLPIMFV) and 141–161 (WFVDSLALFGAGAMLGDAFLH). Residues 170 to 197 (GHSHSNDHHENHDHHDHSHSDSPSHSHS) form a disordered region. The span at 173 to 193 (HSNDHHENHDHHDHSHSDSPS) shows a compositional bias: basic and acidic residues. The chain crosses the membrane as a helical span at residues 201–221 (LSVGLSVLAGIVVFLLVEKLV). The segment at 228–315 (SSGSNTWGHH…GKSDKPEQVE (88 aa)) is disordered. A compositionally biased stretch (basic residues) spans 235 to 246 (GHHHHHHHAGSK). A compositionally biased stretch (basic and acidic residues) spans 247–256 (KLKDEGDHNN). The span at 257-279 (LDQQSSSDAIVNSSEKVSGGSTD) shows a compositional bias: polar residues. A compositionally biased stretch (basic and acidic residues) spans 292-315 (ATDKSDSGTEITSDGKSDKPEQVE). Helical transmembrane passes span 387 to 407 (LFFNFLSALVALAGTALVLVW), 415 to 435 (SLIEGFTAGGFIYIAVAGVLA), and 448 to 468 (SACHLISLILGMSVALCISLI).

It belongs to the ZIP transporter (TC 2.A.5) family. KE4/Catsup subfamily.

The protein localises to the membrane. In terms of biological role, may participate in auxin metabolism or response. Probable transporter. The protein is IAA-alanine resistance protein 1 (IAR1) of Arabidopsis thaliana (Mouse-ear cress).